The following is a 354-amino-acid chain: Inactive ADP-ribosyltransferase arh2 (354 aa).

The protein belongs to the ADP-ribosylglycohydrolase family. Expressed in heart (at protein level). A short form is detected in both heart and tadpole tail (at protein level).

It is found in the cytoplasm. The protein localises to the myofibril. Its subcellular location is the sarcomere. In terms of biological role, required for myofibril assembly and outgrowth of the cardiac chambers in the developing heart. Appears to be catalytically inactive, showing no activity against O-acetyl-ADP-ribose. This Xenopus laevis (African clawed frog) protein is Inactive ADP-ribosyltransferase arh2 (adprhl1).